A 130-amino-acid polypeptide reads, in one-letter code: Small ribosomal subunit protein uS9 (130 aa).

This sequence belongs to the universal ribosomal protein uS9 family.

The sequence is that of Small ribosomal subunit protein uS9 from Geotalea uraniireducens (strain Rf4) (Geobacter uraniireducens).